Here is a 373-residue protein sequence, read N- to C-terminus: T-protein (373 aa).

In terms of domain architecture, Chorismate mutase spans 1–90; that stretch reads MVAELTALRD…ESYTSENDKG (90 aa). The region spanning 99–361 is the Prephenate/arogenate dehydrogenase domain; that stretch reads RPVVIVGGKG…DHAKRFLVES (263 aa).

This sequence in the C-terminal section; belongs to the prephenate/arogenate dehydrogenase family.

The protein resides in the cytoplasm. The catalysed reaction is chorismate = prephenate. The enzyme catalyses prephenate + NAD(+) = 3-(4-hydroxyphenyl)pyruvate + CO2 + NADH. Its pathway is amino-acid biosynthesis; L-tyrosine biosynthesis; (4-hydroxyphenyl)pyruvate from prephenate (NAD(+) route): step 1/1. It functions in the pathway metabolic intermediate biosynthesis; prephenate biosynthesis; prephenate from chorismate: step 1/1. The chain is T-protein (tyrA) from Enterobacter agglomerans (Erwinia herbicola).